Reading from the N-terminus, the 199-residue chain is Thymidine kinase (199 aa).

ATP is bound by residues 9 to 16 (GAMSSGKT) and 93 to 96 (DEAQ). The active-site Proton acceptor is glutamate 94. Residues cysteine 151, cysteine 154, cysteine 188, and histidine 191 each coordinate Zn(2+).

The protein belongs to the thymidine kinase family. As to quaternary structure, homotetramer.

The protein localises to the cytoplasm. The enzyme catalyses thymidine + ATP = dTMP + ADP + H(+). The chain is Thymidine kinase from Lactobacillus acidophilus (strain ATCC 700396 / NCK56 / N2 / NCFM).